The sequence spans 363 residues: NAD(P)H-quinone oxidoreductase subunit 1, chloroplastic (363 aa).

A run of 6 helical transmembrane segments spans residues Ile27–Ile47, Phe98–Phe118, Leu127–Met147, Tyr248–Ser268, Val300–Ile320, and Leu336–Thr356.

Belongs to the complex I subunit 1 family. In terms of assembly, NDH is composed of at least 16 different subunits, 5 of which are encoded in the nucleus.

It is found in the plastid. The protein resides in the chloroplast thylakoid membrane. It catalyses the reaction a plastoquinone + NADH + (n+1) H(+)(in) = a plastoquinol + NAD(+) + n H(+)(out). It carries out the reaction a plastoquinone + NADPH + (n+1) H(+)(in) = a plastoquinol + NADP(+) + n H(+)(out). Its function is as follows. NDH shuttles electrons from NAD(P)H:plastoquinone, via FMN and iron-sulfur (Fe-S) centers, to quinones in the photosynthetic chain and possibly in a chloroplast respiratory chain. The immediate electron acceptor for the enzyme in this species is believed to be plastoquinone. Couples the redox reaction to proton translocation, and thus conserves the redox energy in a proton gradient. This chain is NAD(P)H-quinone oxidoreductase subunit 1, chloroplastic, found in Platanus occidentalis (Sycamore).